We begin with the raw amino-acid sequence, 128 residues long: Small ribosomal subunit protein uS11 (128 aa).

The protein belongs to the universal ribosomal protein uS11 family. Part of the 30S ribosomal subunit. Interacts with proteins S7 and S18. Binds to IF-3.

Located on the platform of the 30S subunit, it bridges several disparate RNA helices of the 16S rRNA. Forms part of the Shine-Dalgarno cleft in the 70S ribosome. The protein is Small ribosomal subunit protein uS11 of Porphyromonas gingivalis (strain ATCC BAA-308 / W83).